We begin with the raw amino-acid sequence, 285 residues long: Phosphatidylserine decarboxylase proenzyme (285 aa).

Active-site charge relay system; for autoendoproteolytic cleavage activity residues include D89, H146, and S252. Catalysis depends on S252, which acts as the Schiff-base intermediate with substrate; via pyruvic acid; for decarboxylase activity. S252 is modified (pyruvic acid (Ser); by autocatalysis).

Belongs to the phosphatidylserine decarboxylase family. PSD-B subfamily. Prokaryotic type I sub-subfamily. In terms of assembly, heterodimer of a large membrane-associated beta subunit and a small pyruvoyl-containing alpha subunit. Pyruvate serves as cofactor. Is synthesized initially as an inactive proenzyme. Formation of the active enzyme involves a self-maturation process in which the active site pyruvoyl group is generated from an internal serine residue via an autocatalytic post-translational modification. Two non-identical subunits are generated from the proenzyme in this reaction, and the pyruvate is formed at the N-terminus of the alpha chain, which is derived from the carboxyl end of the proenzyme. The autoendoproteolytic cleavage occurs by a canonical serine protease mechanism, in which the side chain hydroxyl group of the serine supplies its oxygen atom to form the C-terminus of the beta chain, while the remainder of the serine residue undergoes an oxidative deamination to produce ammonia and the pyruvoyl prosthetic group on the alpha chain. During this reaction, the Ser that is part of the protease active site of the proenzyme becomes the pyruvoyl prosthetic group, which constitutes an essential element of the active site of the mature decarboxylase.

It is found in the cell membrane. It carries out the reaction a 1,2-diacyl-sn-glycero-3-phospho-L-serine + H(+) = a 1,2-diacyl-sn-glycero-3-phosphoethanolamine + CO2. It participates in phospholipid metabolism; phosphatidylethanolamine biosynthesis; phosphatidylethanolamine from CDP-diacylglycerol: step 2/2. In terms of biological role, catalyzes the formation of phosphatidylethanolamine (PtdEtn) from phosphatidylserine (PtdSer). The polypeptide is Phosphatidylserine decarboxylase proenzyme (Vibrio vulnificus (strain CMCP6)).